A 421-amino-acid chain; its full sequence is Subtilisin-like protease 2 (421 aa).

The signal sequence occupies residues 1 to 16; that stretch reads MQLLNFGLLLLPFVAG. Residues 17 to 122 constitute a propeptide that is removed on maturation; sequence DLAPQPEPLL…VHPDQHVYLA (106 aa). Residues 36–122 enclose the Inhibitor I9 domain; that stretch reads QYIVTLKEGL…VHPDQHVYLA (87 aa). The Peptidase S8 domain maps to 131-421; that stretch reads RWGLGYMSSK…ERKFTLPKYF (291 aa). Residues Asp169 and His201 each act as charge relay system in the active site. N-linked (GlcNAc...) asparagine glycosylation is found at Asn248, Asn261, and Asn348. Residue Ser357 is the Charge relay system of the active site. A glycan (N-linked (GlcNAc...) asparagine) is linked at Asn388.

It belongs to the peptidase S8 family.

The protein localises to the secreted. In terms of biological role, secreted subtilisin-like serine protease with keratinolytic activity that contributes to pathogenicity. The chain is Subtilisin-like protease 2 (SUB2) from Trichophyton tonsurans (Scalp ringworm fungus).